A 112-amino-acid polypeptide reads, in one-letter code: MFARQATSVSAFLVLTLSLFAAASPLGPAPPTTSQCNVGNQQCCNTVQDSSSAPAAALLGLLGVVLQDVDVLVCSPITVIGGLNSACDASPVCCENNSFGSLISVGCIPISL.

The first 23 residues, Met-1–Ala-23, serve as a signal peptide directing secretion. Disulfide bonds link Cys-36/Cys-93, Cys-43/Cys-87, Cys-44/Cys-74, and Cys-94/Cys-107. Residue Asn-96 is glycosylated (N-linked (GlcNAc...) asparagine).

It belongs to the fungal hydrophobin family. As to quaternary structure, self-assembles to form functional amyloid fibrils called rodlets. Self-assembly into fibrillar rodlets occurs spontaneously at hydrophobic:hydrophilic interfaces and the rodlets further associate laterally to form amphipathic monolayers.

The protein resides in the secreted. The protein localises to the cell wall. Aerial growth, conidiation, and dispersal of filamentous fungi in the environment rely upon a capability of their secreting small amphipathic proteins called hydrophobins (HPBs) with low sequence identity. Class I can self-assemble into an outermost layer of rodlet bundles on aerial cell surfaces, conferring cellular hydrophobicity that supports fungal growth, development and dispersal; whereas Class II form highly ordered films at water-air interfaces through intermolecular interactions but contribute nothing to the rodlet structure. This is Class I hydrophobin 7 from Flammulina velutipes (Agaricus velutipes).